Reading from the N-terminus, the 170-residue chain is Metalloproteinase inhibitor 4 (170 aa).

The NTR domain occupies 1-105; it reads ISSEKVVPAS…SLNHHYHLNC (105 aa). 2 involved in metalloproteinase-binding regions span residues 6–9 and 48–49; these read VVPA and SS. 3 disulfides stabilise this stretch: Cys-107–Cys-154, Cys-112–Cys-117, and Cys-125–Cys-146.

The protein belongs to the protease inhibitor I35 (TIMP) family.

The protein localises to the secreted. Functionally, complexes with metalloproteinases (such as collagenases) and irreversibly inactivates them by binding to their catalytic zinc cofactor. The chain is Metalloproteinase inhibitor 4 (TIMP4) from Oryctolagus cuniculus (Rabbit).